Reading from the N-terminus, the 701-residue chain is Elongation factor G (701 aa).

Positions K8–D290 constitute a tr-type G domain. Residues A17–T24, D88–H92, and N142–D145 contribute to the GTP site.

It belongs to the TRAFAC class translation factor GTPase superfamily. Classic translation factor GTPase family. EF-G/EF-2 subfamily.

The protein localises to the cytoplasm. Functionally, catalyzes the GTP-dependent ribosomal translocation step during translation elongation. During this step, the ribosome changes from the pre-translocational (PRE) to the post-translocational (POST) state as the newly formed A-site-bound peptidyl-tRNA and P-site-bound deacylated tRNA move to the P and E sites, respectively. Catalyzes the coordinated movement of the two tRNA molecules, the mRNA and conformational changes in the ribosome. In Marinobacter nauticus (strain ATCC 700491 / DSM 11845 / VT8) (Marinobacter aquaeolei), this protein is Elongation factor G.